Consider the following 469-residue polypeptide: 3-isopropylmalate dehydratase large subunit (469 aa).

Residues cysteine 347, cysteine 410, and cysteine 413 each contribute to the [4Fe-4S] cluster site.

The protein belongs to the aconitase/IPM isomerase family. LeuC type 1 subfamily. Heterodimer of LeuC and LeuD. Requires [4Fe-4S] cluster as cofactor.

The catalysed reaction is (2R,3S)-3-isopropylmalate = (2S)-2-isopropylmalate. Its pathway is amino-acid biosynthesis; L-leucine biosynthesis; L-leucine from 3-methyl-2-oxobutanoate: step 2/4. In terms of biological role, catalyzes the isomerization between 2-isopropylmalate and 3-isopropylmalate, via the formation of 2-isopropylmaleate. This is 3-isopropylmalate dehydratase large subunit from Burkholderia thailandensis (strain ATCC 700388 / DSM 13276 / CCUG 48851 / CIP 106301 / E264).